A 177-amino-acid chain; its full sequence is Nucleoside triphosphate/diphosphate phosphatase (177 aa).

The active-site Proton donor is R24. Residues N88, D104, D106, D108, D121, and E124 each contribute to the Mg(2+) site.

The protein belongs to the Ntdp family. The cofactor is Mg(2+).

The catalysed reaction is a ribonucleoside 5'-triphosphate + H2O = a ribonucleoside 5'-diphosphate + phosphate + H(+). It carries out the reaction a ribonucleoside 5'-diphosphate + H2O = a ribonucleoside 5'-phosphate + phosphate + H(+). In terms of biological role, has nucleoside phosphatase activity towards nucleoside triphosphates and nucleoside diphosphates. The sequence is that of Nucleoside triphosphate/diphosphate phosphatase from Geobacillus sp. (strain WCH70).